Consider the following 469-residue polypeptide: Programmed cell death protein 4 (469 aa).

Met-1 bears the N-acetylmethionine mark. Disordered stretches follow at residues 1-38 and 58-128; these read MDVE…EIKN and KAKR…GTPG. Ser-25 carries the phosphoserine modification. A Nuclear localization signal motif is present at residues 58 to 64; the sequence is KAKRRLR. Ser-67 carries the post-translational modification Phosphoserine; by PKB and RPS6KB1. Residues Ser-68, Ser-71, Ser-76, and Ser-78 each carry the phosphoserine modification. The Phosphodegron motif lies at 70–76; that stretch reads DSGRGDS. Over residues 74–83 the composition is skewed to low complexity; sequence GDSVSDNGSD. A compositionally biased stretch (polar residues) spans 84-93; that stretch reads TLRSGVTVPT. The residue at position 94 (Ser-94) is a Phosphoserine. Gly residues predominate over residues 114-125; sequence KKGGAGGKGVWG. Tyr-152 is subject to Phosphotyrosine. Residues 163–284 form the MI 1 domain; sequence AFEKTLTPII…CNTYIDSYKG (122 aa). Phosphoserine is present on residues Ser-313 and Ser-317. Positions 326 to 449 constitute an MI 2 domain; that stretch reads HLVKEIDMLL…SKQLRDLCPS (124 aa). The Nuclear localization signal signature appears at 448–454; the sequence is PSRGRKR. Ser-457 carries the post-translational modification Phosphoserine; by PKB.

It belongs to the PDCD4 family. Interacts (via MI domains) with EIF4A2. Interacts (via MI domains) with EIF4A1 (via N-terminal domain). Heterotrimer with EIF4A1; one molecule of PDCD4 binds two molecules of EIF4A1. Interacts with EIF4G1. May form a complex with EIF4A1 and EIF4G1. The interaction between PDCD4 and EIF4A1 interferes with the interaction between EIF4A1 and EIF4G. When phosphorylated, interacts with BTRC and FBXW11. Polyubiquitinated, leading to its proteasomal degradation. Rapidly degraded in response to mitogens. Phosphorylation of the phosphodegron promotes interaction with BTRC and proteasomal degradation. In terms of processing, phosphorylated at Ser-67 by RPS6KB1 in response to mitogens; phosphorylation promotes proteasomal degradation of PDCD4.

It localises to the nucleus. The protein localises to the cytoplasm. Inhibits translation initiation and cap-dependent translation. May excert its function by hindering the interaction between EIF4A1 and EIF4G. Inhibits the helicase activity of EIF4A. Modulates the activation of JUN kinase. Down-regulates the expression of MAP4K1, thus inhibiting events important in driving invasion, namely, MAPK85 activation and consequent JUN-dependent transcription. May play a role in apoptosis. Tumor suppressor. Inhibits tumor promoter-induced neoplastic transformation. Binds RNA. This Pongo abelii (Sumatran orangutan) protein is Programmed cell death protein 4 (PDCD4).